The primary structure comprises 352 residues: C-C chemokine receptor type 5 (352 aa).

Residues 1 to 30 (MDYQVSSPTYDIDYYTSEPCQKVNVKQIAA) lie on the Extracellular side of the membrane. The residue at position 3 (Tyr-3) is a Sulfotyrosine. O-linked (GalNAc...) serine glycosylation is found at Ser-6 and Ser-7. Tyr-10, Tyr-14, and Tyr-15 each carry sulfotyrosine. Disulfide bonds link Cys-20/Cys-269 and Cys-101/Cys-178. The chain crosses the membrane as a helical span at residues 31–58 (RLLPPLYSLVFIFGFVGNILVVLILINC). Residues 59–68 (KRLKSMTDIY) are Cytoplasmic-facing. The chain crosses the membrane as a helical span at residues 69-89 (LLNLAISDLFFLLTVPFWAHY). Residues 90 to 102 (AAAQWDFGNTMCQ) lie on the Extracellular side of the membrane. Residues 103–124 (LLTGLYFIGFFSGIFFIILLTI) form a helical membrane-spanning segment. Over 125-141 (DRYLAIVHAVFALKART) the chain is Cytoplasmic. A helical membrane pass occupies residues 142 to 166 (VTFGVVTSVITWVVAVFASLPGIIF). Topologically, residues 167–198 (TRSQREGVHYTCSSHFPYSQYQFWKNFQTLKI) are extracellular. A helical membrane pass occupies residues 199 to 218 (VILGLVLPLLVMVICYSGIL). Over 219–235 (KTLLRCRNEKKRHRAVR) the chain is Cytoplasmic. Residues 236–260 (LIFTIMIVYFLFWAPYNIVLLLNTF) form a helical membrane-spanning segment. The Extracellular portion of the chain corresponds to 261 to 277 (QEFFGLNNCSSSNRLDQ). The helical transmembrane segment at 278 to 301 (AMQVTETLGMTHCCINPIIYAFVG) threads the bilayer. Residues 302–352 (EKFRNYLLVFFQKHIAKRFCKCCSIFQQEAPERASSVYTRSTGEQETSVGL) lie on the Cytoplasmic side of the membrane. Residues Cys-321, Cys-323, and Cys-324 are each lipidated (S-palmitoyl cysteine). Residues Ser-336, Ser-337, Ser-342, and Ser-349 each carry the phosphoserine; by BARK1 modification.

This sequence belongs to the G-protein coupled receptor 1 family. Interacts with PRAF2. Efficient ligand binding to CCL3/MIP-1alpha and CCL4/MIP-1beta requires sulfation, O-glycosylation and sialic acid modifications. Glycosylation on Ser-6 is required for efficient binding of CCL4. Interacts with GRK2. Interacts with ARRB1 and ARRB2. Interacts with CNIH4. Interacts with S100A4; this interaction stimulates T-lymphocyte chemotaxis. In terms of processing, sulfated on at least 2 of the N-terminal tyrosines. Sulfation is required for efficient binding of the chemokines, CCL3 and CCL4. Palmitoylation in the C-terminal is important for cell surface expression. Post-translationally, phosphorylation on serine residues in the C-terminal is stimulated by binding CC chemokines especially by APO-RANTES. In terms of processing, O-glycosylated, but not N-glycosylated. Ser-6 appears to be the major site even if Ser-7 may be also O-glycosylated. Also sialylated glycans present which contribute to chemokine binding. Thr-16 and Ser-17 may also be glycosylated and, if so, with small moieties such as a T-antigen.

It is found in the cell membrane. In terms of biological role, receptor for a number of inflammatory CC-chemokines including CCL3/MIP-1-alpha, CCL4/MIP-1-beta and RANTES and subsequently transduces a signal by increasing the intracellular calcium ion level. May play a role in the control of granulocytic lineage proliferation or differentiation. Participates in T-lymphocyte migration to the infection site by acting as a chemotactic receptor. This Rhinopithecus avunculus (Tonkin snub-nosed monkey) protein is C-C chemokine receptor type 5 (CCR5).